Here is a 524-residue protein sequence, read N- to C-terminus: Probable cytochrome P450 12c1, mitochondrial (524 aa).

C470 contributes to the heme binding site.

The protein belongs to the cytochrome P450 family. The cofactor is heme.

The protein resides in the mitochondrion membrane. The chain is Probable cytochrome P450 12c1, mitochondrial (Cyp12c1) from Drosophila melanogaster (Fruit fly).